The primary structure comprises 584 residues: Tyrosine-protein kinase Dnt (584 aa).

A signal peptide spans 1–40; the sequence is MESVNKCGKSASTRNCTVKMSRKMWVLSLLALAALQLHSG. Over 41-208 the chain is Extracellular; the sequence is SEVAAHLNVF…LETVMLPPTG (168 aa). The WIF domain occupies 49-180; it reads VFLNPVEVMR…HLVFRRKKIC (132 aa). N-linked (GlcNAc...) asparagine glycosylation is found at N124, N163, N168, and N183. The chain crosses the membrane as a helical span at residues 209-229; sequence LITLVVGVSVAMGSVCLLLMI. Over 230-584 the chain is Cytoplasmic; sequence AYCVKGAANK…EFYSQITRYV (355 aa). The segment at 241–261 is disordered; it reads QHHQHGGQPMRTSSFQRLNTH. Residues 250–261 are compositionally biased toward polar residues; that stretch reads MRTSSFQRLNTH. One can recognise a Protein kinase domain in the interval 317–577; sequence VRLSSLLQEG…QLQSCLSEFY (261 aa). ATP is bound by residues 323 to 331 and K345; that span reads LQEGTFGRV. D442 (proton acceptor) is an active-site residue. Y472 is modified (phosphotyrosine; by autocatalysis).

The protein belongs to the protein kinase superfamily. Tyr protein kinase family. In terms of tissue distribution, expressed in dynamic domains in the embryonic epidermis, many of which border on sites of epithelial invagination into the embryo interior, including ventral furrow, cephalic furrow, fore- and hindgut, optic lobe and tracheal pits. Later in embryogenesis, expression is seen in imaginal tissues.

It localises to the cell membrane. It catalyses the reaction L-tyrosyl-[protein] + ATP = O-phospho-L-tyrosyl-[protein] + ADP + H(+). Its function is as follows. May play an essential role in neuronal pathway recognition and ventral muscle attachment site selection. This chain is Tyrosine-protein kinase Dnt (dnt), found in Drosophila melanogaster (Fruit fly).